Consider the following 69-residue polypeptide: Putative membrane protein insertion efficiency factor (69 aa).

Belongs to the UPF0161 family.

Its subcellular location is the cell membrane. Could be involved in insertion of integral membrane proteins into the membrane. The chain is Putative membrane protein insertion efficiency factor from Caldanaerobacter subterraneus subsp. tengcongensis (strain DSM 15242 / JCM 11007 / NBRC 100824 / MB4) (Thermoanaerobacter tengcongensis).